A 306-amino-acid polypeptide reads, in one-letter code: Curved DNA-binding protein (306 aa).

Residues 5 to 69 enclose the J domain; the sequence is DYYAIMGVKP…QRRAEYDQMW (65 aa).

Its subcellular location is the cytoplasm. The protein localises to the nucleoid. DNA-binding protein that preferentially recognizes a curved DNA sequence. It is probably a functional analog of DnaJ; displays overlapping activities with DnaJ, but functions under different conditions, probably acting as a molecular chaperone in an adaptive response to environmental stresses other than heat shock. Lacks autonomous chaperone activity; binds native substrates and targets them for recognition by DnaK. Its activity is inhibited by the binding of CbpM. In Escherichia coli O157:H7, this protein is Curved DNA-binding protein.